A 397-amino-acid chain; its full sequence is Lysophospholipid transporter LplT (397 aa).

Topologically, residues 1–17 are periplasmic; it reads MSESVHTNTSLWSKGMK. A helical membrane pass occupies residues 18-38; sequence AVIVAQFLSAFGDNALLFATL. Over 39–52 the chain is Cytoplasmic; it reads ALLKAQFYPEWSQP. The helical transmembrane segment at 53–73 threads the bilayer; sequence ILQMVFVGAYILFAPFVGQVA. The Periplasmic segment spans residues 74–90; that stretch reads DSFAKGRVMMFANGLKL. A helical membrane pass occupies residues 91–111; the sequence is LGAASICFGINPFLGYTLVGV. At 112-144 the chain is on the cytoplasmic side; sequence GAAAYSPAKYGILGELTTGSKLVKANGLMEAST. The chain crosses the membrane as a helical span at residues 145–165; the sequence is IAAILLGSVAGGVLADWHVLV. Ala-166 is a topological domain (periplasmic). Residues 167-187 form a helical membrane-spanning segment; that stretch reads LAACALAYGGAVVANIYIPKL. The Cytoplasmic portion of the chain corresponds to 188–226; that stretch reads AAARPGQSWNLINMTRSFLNACTSLWRNGETRFSLVGTS. Residues 227-247 traverse the membrane as a helical segment; the sequence is LFWGAGVTLRFLLVLWVPVAL. At 248 to 256 the chain is on the periplasmic side; that stretch reads GITDNATPT. A helical membrane pass occupies residues 257–277; the sequence is YLNAMVAIGIVVGAGAAAKLV. Topologically, residues 278–280 are cytoplasmic; sequence TLE. A helical membrane pass occupies residues 281–301; the sequence is TVSRCMPAGILIGVVVLIFSL. Over 302–304 the chain is Periplasmic; the sequence is QHE. The helical transmembrane segment at 305–325 threads the bilayer; the sequence is LLPAYALLMLIGVLGGFFVVP. The Cytoplasmic portion of the chain corresponds to 326–343; sequence LNALLQERGKKSVGAGNA. Residues 344–364 traverse the membrane as a helical segment; sequence IAVQNLGENSAMLLMLGIYSL. At 365–366 the chain is on the periplasmic side; that stretch reads AV. Residues 367–387 form a helical membrane-spanning segment; that stretch reads MVGIPVVPIGIGFGALFALAI. The Cytoplasmic portion of the chain corresponds to 388 to 397; the sequence is TALWIWQRRH.

This sequence belongs to the major facilitator superfamily. LplT (TC 2.A.1.42) family.

The protein localises to the cell inner membrane. In terms of biological role, catalyzes the facilitated diffusion of 2-acyl-glycero-3-phosphoethanolamine (2-acyl-GPE) into the cell. This is Lysophospholipid transporter LplT from Escherichia coli (strain SMS-3-5 / SECEC).